We begin with the raw amino-acid sequence, 247 residues long: Ribosomal RNA small subunit methyltransferase G (247 aa).

S-adenosyl-L-methionine-binding positions include glycine 84, phenylalanine 89, 136–137, and arginine 155; that span reads AE.

This sequence belongs to the methyltransferase superfamily. RNA methyltransferase RsmG family.

It localises to the cytoplasm. In terms of biological role, specifically methylates the N7 position of a guanine in 16S rRNA. This Prochlorococcus marinus (strain MIT 9313) protein is Ribosomal RNA small subunit methyltransferase G.